The chain runs to 236 residues: Lipoprotein signal peptidase (236 aa).

The next 4 membrane-spanning stretches (helical) occupy residues 8–28, 44–64, 68–88, and 98–118; these read FYGI…WVYF, WFKL…FGFT, VLLT…IWNL, and LLWG…DSIF. Residues aspartate 141 and aspartate 174 contribute to the active site. The chain crosses the membrane as a helical span at residues 166 to 186; that stretch reads CLPVFNLADVAILAGVALIVL.

This sequence belongs to the peptidase A8 family.

The protein localises to the cell inner membrane. It catalyses the reaction Release of signal peptides from bacterial membrane prolipoproteins. Hydrolyzes -Xaa-Yaa-Zaa-|-(S,diacylglyceryl)Cys-, in which Xaa is hydrophobic (preferably Leu), and Yaa (Ala or Ser) and Zaa (Gly or Ala) have small, neutral side chains.. Its pathway is protein modification; lipoprotein biosynthesis (signal peptide cleavage). In terms of biological role, this protein specifically catalyzes the removal of signal peptides from prolipoproteins. This is Lipoprotein signal peptidase from Amoebophilus asiaticus (strain 5a2).